A 340-amino-acid polypeptide reads, in one-letter code: Phosphoribosylformylglycinamidine cyclo-ligase (340 aa).

Belongs to the AIR synthase family.

The protein localises to the cytoplasm. The enzyme catalyses 2-formamido-N(1)-(5-O-phospho-beta-D-ribosyl)acetamidine + ATP = 5-amino-1-(5-phospho-beta-D-ribosyl)imidazole + ADP + phosphate + H(+). It participates in purine metabolism; IMP biosynthesis via de novo pathway; 5-amino-1-(5-phospho-D-ribosyl)imidazole from N(2)-formyl-N(1)-(5-phospho-D-ribosyl)glycinamide: step 2/2. The polypeptide is Phosphoribosylformylglycinamidine cyclo-ligase (Streptococcus pneumoniae serotype 4 (strain ATCC BAA-334 / TIGR4)).